We begin with the raw amino-acid sequence, 173 residues long: Mesencephalic astrocyte-derived neurotrophic factor homolog (173 aa).

A signal peptide spans 1-22; it reads MNTSQIVLMFCLVVGVAQTALA. Disulfide bonds link C28–C114, C31–C103, C61–C72, and C148–C151.

Belongs to the ARMET family.

The protein localises to the secreted. In terms of biological role, required during the maturation of the embryonic nervous system for maintenance of neuronal and cuticular connectivity. Essential for maintenance of dopaminergic neurons and dopamine levels. This is Mesencephalic astrocyte-derived neurotrophic factor homolog from Drosophila grimshawi (Hawaiian fruit fly).